Consider the following 402-residue polypeptide: Prophage integrase IntZ (402 aa).

Residues 103–183 enclose the Core-binding (CB) domain; it reads AGFKKVAEDW…RIGEIFKFAV (81 aa). The Tyr recombinase domain occupies 206 to 381; that stretch reads GHNAWIPISE…AYLKQRRAMM (176 aa). Residues arginine 244, lysine 271, histidine 332, arginine 335, and histidine 359 contribute to the active site. The active-site O-(3'-phospho-DNA)-tyrosine intermediate is tyrosine 368.

This sequence belongs to the 'phage' integrase family.

Its function is as follows. Integrase is necessary for integration of the phage into the host genome by site-specific recombination. In conjunction with excisionase, integrase is also necessary for excision of the prophage from the host genome. The polypeptide is Prophage integrase IntZ (intZ) (Escherichia coli (strain K12)).